A 225-amino-acid polypeptide reads, in one-letter code: Superantigen-like protein 11 (225 aa).

Positions 1–30 are cleaved as a signal peptide; the sequence is MKLKNIAKASLALGILTTGMITTTAQPVKA. The tract at residues 94–196 is sialyl Lewis X-binding; sequence VDIFVVRENS…RITMKDGGFY (103 aa).

It belongs to the staphylococcal/streptococcal toxin family. In terms of assembly, homodimer (via its C-terminal domain). Interacts with host FCAR and SELPLG (via sialyl Lewis X).

The protein resides in the secreted. Secreted protein that plays a role in the inhibition of host immune system. Targets myeloid cells such as monocytes or granulocytes through binding with sialyllactosamine-containing glycoproteins. Prevents initial rolling of neutrophils toward the site of infection by interacting with host SELPLG. Disrupts neutrophil motility by induction of cell adhesion via interacting with glycans but independently of SELPLG. The polypeptide is Superantigen-like protein 11 (Staphylococcus aureus (strain Newman)).